The following is a 411-amino-acid chain: Heparan-sulfate 6-O-sulfotransferase 1 (411 aa).

Residues 11-17 lie on the Cytoplasmic side of the membrane; that stretch reads MVERASK. The chain crosses the membrane as a helical; Signal-anchor for type II membrane protein span at residues 18–37; the sequence is FVLVVAGSVCFMLILYQYAG. Residues 38–411 lie on the Lumenal side of the membrane; sequence PGLSLGAPGG…DYMSHIIEKW (374 aa). 93–101 is a 3'-phosphoadenylyl sulfate binding site; sequence HIQKTGGTT. Substrate is bound by residues 123-124, Arg140, Trp145, and His150; that span reads KK. His150 functions as the Proton acceptor in the catalytic mechanism. Residues Arg185 and Ser193 each contribute to the 3'-phosphoadenylyl sulfate site. Substrate is bound by residues His197 and Trp204. Residue Asn264 is glycosylated (N-linked (GlcNAc...) asparagine). Residue 317–319 coordinates 3'-phosphoadenylyl sulfate; it reads MQY. Asn320 is a glycosylation site (N-linked (GlcNAc...) asparagine). 323 to 324 provides a ligand contact to 3'-phosphoadenylyl sulfate; it reads RA. Residues 352 to 387 are a coiled coil; the sequence is KDLFQQRYQYKRQLERREQRLRSREERLLHRAKEAL.

This sequence belongs to the sulfotransferase 6 family. In terms of processing, N-glycosylated. As to expression, expressed in fetal brain.

The protein resides in the membrane. It carries out the reaction alpha-D-glucosaminyl-[heparan sulfate](n) + 3'-phosphoadenylyl sulfate = 6-sulfo-alpha-D-glucosaminyl-[heparan sulfate](n) + adenosine 3',5'-bisphosphate + H(+). 6-O-sulfation enzyme which catalyzes the transfer of sulfate from 3'-phosphoadenosine 5'-phosphosulfate (PAPS) to position 6 of the N-sulfoglucosamine residue (GlcNS) of heparan sulfate. Critical for normal neuronal development where it may play a role in neuron branching. May also play a role in limb development. May prefer iduronic acid. The sequence is that of Heparan-sulfate 6-O-sulfotransferase 1 from Homo sapiens (Human).